We begin with the raw amino-acid sequence, 219 residues long: uncharacterized protein (219 aa).

One can recognise an ACT domain in the interval Gly4 to Ser79.

This is an uncharacterized protein from Archaeoglobus fulgidus (strain ATCC 49558 / DSM 4304 / JCM 9628 / NBRC 100126 / VC-16).